We begin with the raw amino-acid sequence, 498 residues long: Guanosine-5'-triphosphate,3'-diphosphate pyrophosphatase (498 aa).

The protein belongs to the GppA/Ppx family. GppA subfamily.

It catalyses the reaction guanosine 3'-diphosphate 5'-triphosphate + H2O = guanosine 3',5'-bis(diphosphate) + phosphate + H(+). It participates in purine metabolism; ppGpp biosynthesis; ppGpp from GTP: step 2/2. In terms of biological role, catalyzes the conversion of pppGpp to ppGpp. Guanosine pentaphosphate (pppGpp) is a cytoplasmic signaling molecule which together with ppGpp controls the 'stringent response', an adaptive process that allows bacteria to respond to amino acid starvation, resulting in the coordinated regulation of numerous cellular activities. The sequence is that of Guanosine-5'-triphosphate,3'-diphosphate pyrophosphatase from Yersinia enterocolitica serotype O:8 / biotype 1B (strain NCTC 13174 / 8081).